Here is a 398-residue protein sequence, read N- to C-terminus: Phosphoglycerate kinase (398 aa).

Substrate is bound by residues Asp-21 to Asn-23, Arg-36, His-59 to Arg-62, Arg-119, and Arg-157. Residues Lys-208, Gly-296, Glu-327, and Gly-354 to Ser-357 contribute to the ATP site.

It belongs to the phosphoglycerate kinase family. In terms of assembly, monomer.

It is found in the cytoplasm. The enzyme catalyses (2R)-3-phosphoglycerate + ATP = (2R)-3-phospho-glyceroyl phosphate + ADP. It participates in carbohydrate degradation; glycolysis; pyruvate from D-glyceraldehyde 3-phosphate: step 2/5. The polypeptide is Phosphoglycerate kinase (Streptococcus pyogenes serotype M18 (strain MGAS8232)).